We begin with the raw amino-acid sequence, 469 residues long: Asparagine--tRNA ligase (469 aa).

This sequence belongs to the class-II aminoacyl-tRNA synthetase family. Homodimer.

Its subcellular location is the cytoplasm. It carries out the reaction tRNA(Asn) + L-asparagine + ATP = L-asparaginyl-tRNA(Asn) + AMP + diphosphate + H(+). In Porphyromonas gingivalis (strain ATCC BAA-308 / W83), this protein is Asparagine--tRNA ligase.